We begin with the raw amino-acid sequence, 265 residues long: Probable aquaporin TIP3-2 (265 aa).

2 consecutive transmembrane segments (helical) span residues 32–52 and 62–82; these read LSEF…VYGL and LGGL…AVAV. Residues 92-94 carry the NPA 1 motif; sequence NPA. The next 3 membrane-spanning stretches (helical) occupy residues 110–130, 151–171, and 179–199; these read AALY…LLRL, ALLL…ATAV, and DIAP…GGPF. Residues 205–207 carry the NPA 2 motif; that stretch reads NPA. The chain crosses the membrane as a helical span at residues 223-243; the sequence is WVYWLGPLIGAGMAGALYEFV.

The protein belongs to the MIP/aquaporin (TC 1.A.8) family. TIP (TC 1.A.8.10) subfamily. Expressed in leaves and at lower levels in roots.

Its subcellular location is the vacuole membrane. Functionally, aquaporins facilitate the transport of water and small neutral solutes across cell membranes. May be involved in transport from the vacuolar compartment to the cytoplasm. The chain is Probable aquaporin TIP3-2 (TIP3-2) from Oryza sativa subsp. japonica (Rice).